The following is a 236-amino-acid chain: CHD1 helical C-terminal domain containing protein 1 (236 aa).

Residues 44-145 (LDQDTFKTCK…SSQPAKFLVT (102 aa)) form a CHD1 helical C-terminal domain (CHCT) region. Positions 184-236 (LSNMQTPGQGSPLPGQPRSQDHVKKDSLRELSQKPKLKRKRIKEAPETPETEP) are disordered. Residues 202–216 (SQDHVKKDSLRELSQ) are compositionally biased toward basic and acidic residues.

The protein resides in the cytoplasm. The protein localises to the nucleus. Its function is as follows. May play a role in regulation of apoptosis. The chain is CHD1 helical C-terminal domain containing protein 1 from Homo sapiens (Human).